The chain runs to 153 residues: Small ribosomal subunit protein uS19 (153 aa).

Residues 1-63 (MGFRGAWNKR…QEIWDEFRAF (63 aa)) are unknown. The tract at residues 64–153 (VNKKAWVDPK…EKSAKVVKKK (90 aa)) is small ribosomal subunit protein uS19.

This sequence belongs to the universal ribosomal protein uS19 family.

In terms of biological role, protein S19 forms a complex with S13 that binds strongly to the 16S ribosomal RNA. This chain is Small ribosomal subunit protein uS19, found in Hydrogenobaculum sp. (strain Y04AAS1).